Here is a 314-residue protein sequence, read N- to C-terminus: Putative gluconeogenesis factor (314 aa).

It belongs to the gluconeogenesis factor family.

It is found in the cytoplasm. In terms of biological role, required for morphogenesis under gluconeogenic growth conditions. This chain is Putative gluconeogenesis factor, found in Thermotoga maritima (strain ATCC 43589 / DSM 3109 / JCM 10099 / NBRC 100826 / MSB8).